The following is a 90-amino-acid chain: UPF0367 protein PMT9312_0127 (90 aa).

Belongs to the UPF0367 family.

This chain is UPF0367 protein PMT9312_0127, found in Prochlorococcus marinus (strain MIT 9312).